The primary structure comprises 609 residues: MSSLADTVEGSEAKRGRFSNNALTSDTGILQKNSTLRNWFLKPTADLKNSCEDRVEDDVNDVYLNDKNSQKSVEERKLGRKVRSFFKQTNSNKDESVLEDEDDALVWKKTSNKCAKKENSHDIQKGSFTKKIRNSIFKSANDVKEFRNENNLLLPVELSSDDENESHFTDANSHVMQSKSPEKIPSKDQCLTKGAKNKGLKKEYEKSFEEYSDDSDDEFSPATPPENVLEGPYKFVFQTPNTFTSQPNITVENDFHKGGRHVIDYLNKKLATMNIDIDLTSGGKQNVSWEEELDQLSDHVIESITNHISKGRMHAQEKQDELEKLKLENLNLSTLKQENLQHKQEINSLKDNLESISKKNNDLILEMNKLKKKSTNNKTNEYISTDENENEEITKSNMGPGILELNVNETSKKLQQSTFKPSKYLPRETRNNENRLKHLEKRIFGLEKSLEKKKKQVRADSVRLDLNRYTIDQFLTLLKSLSEVLQFHNVYGNDLKENDDNIIKIETCCSALNMKNCFEDSSFRLQENSFKRQLGPLFANINFSLIDQLTMNFRFYERSANFQKETIGGLRMMLQDKDNYIKTLMQHLKKKESTKLIKDSKNGASTLTS.

Residues 1-24 (MSSLADTVEGSEAKRGRFSNNALT) are disordered. S159 and S160 each carry phosphoserine. A disordered region spans residues 162–225 (DENESHFTDA…DDEFSPATPP (64 aa)). Over residues 169–179 (TDANSHVMQSK) the composition is skewed to polar residues. Over residues 200 to 209 (LKKEYEKSFE) the composition is skewed to basic and acidic residues. Residues 210-219 (EYSDDSDDEF) are compositionally biased toward acidic residues.

In Saccharomyces cerevisiae (strain ATCC 204508 / S288c) (Baker's yeast), this protein is Spore-specific protein YSW1 (YSW1).